Reading from the N-terminus, the 100-residue chain is MIPLQHGLILAAVLFVLGFTCLVLRRNLLFMLIGLEIMINSAALAFVVGGSYWGQTDGQIMYILAISLAAAEASIGLALLLQLHRHRQNLNIDTVSEMRG.

3 helical membrane-spanning segments follow: residues 4 to 24 (LQHG…CLVL), 28 to 48 (LLFM…AFVV), and 60 to 80 (IMYI…LALL).

This sequence belongs to the complex I subunit 4L family. NDH-1 is composed of 13 different subunits. Subunits NuoA, H, J, K, L, M, N constitute the membrane sector of the complex.

The protein resides in the cell inner membrane. It catalyses the reaction a quinone + NADH + 5 H(+)(in) = a quinol + NAD(+) + 4 H(+)(out). In terms of biological role, NDH-1 shuttles electrons from NADH, via FMN and iron-sulfur (Fe-S) centers, to quinones in the respiratory chain. The immediate electron acceptor for the enzyme in this species is believed to be ubiquinone. Couples the redox reaction to proton translocation (for every two electrons transferred, four hydrogen ions are translocated across the cytoplasmic membrane), and thus conserves the redox energy in a proton gradient. In Proteus mirabilis (strain HI4320), this protein is NADH-quinone oxidoreductase subunit K.